A 383-amino-acid polypeptide reads, in one-letter code: Adaptive-response sensory kinase SasA (383 aa).

The 214-residue stretch at 152–365 folds into the Histidine kinase domain; it reads MVAHELRTPL…CFTFTVPIWQ (214 aa). Residue His-155 is modified to Phosphohistidine; by autocatalysis.

In terms of assembly, homooligomerizes. Interacts with KaiC. Participates in the KaiABC clock complex, whose core is composed of a KaiC homohexamer, 6 KaiB and up to 6 KaiA dimers. SasA and KaiB(fs) compete to bind to KaiC.

It catalyses the reaction ATP + protein L-histidine = ADP + protein N-phospho-L-histidine.. Its function is as follows. Member of the two-component regulatory system SasA/RpaA involved in genome-wide circadian gene expression. One of several clock output pathways. Participates in the Kai clock protein complex, the main circadian regulator in cyanobacteria, via its interaction with KaiC. KaiC enhances the autophosphorylation activity of SasA, which then transfers its phosphate group to RpaA to activate it. In addition to its output function, recruits fold-shifted KaiB (KaiB(fs)) to KaiC to cooperatively form the KaiB(6):KaiC(6) complex (independent of SasA kinase activity). Required for robustness of the circadian rhythm of gene expression and is involved in clock output, also required for adaptation to light/dark cycles. This is Adaptive-response sensory kinase SasA from Parasynechococcus marenigrum (strain WH8102).